The following is a 207-amino-acid chain: Guanylate kinase (207 aa).

The Guanylate kinase-like domain maps to 6–185 (GLLIVLSGPS…AKQRIQSIVE (180 aa)). Position 13–20 (13–20 (GPSGVGKG)) interacts with ATP.

The protein belongs to the guanylate kinase family.

Its subcellular location is the cytoplasm. It carries out the reaction GMP + ATP = GDP + ADP. Essential for recycling GMP and indirectly, cGMP. This is Guanylate kinase from Staphylococcus saprophyticus subsp. saprophyticus (strain ATCC 15305 / DSM 20229 / NCIMB 8711 / NCTC 7292 / S-41).